A 261-amino-acid chain; its full sequence is RING-H2 finger protein ATL58 (261 aa).

A helical transmembrane segment spans residues 25–45; it reads AFIFSVPICFTFIILFLFYLI. The segment at 100–142 adopts an RING-type; atypical zinc-finger fold; that stretch reads CSVCLGDYQPNDKLQQIPVCKHTFHMDCIDLWLTSHTTCPLCR. Disordered regions lie at residues 149–227 and 241–261; these read RSRQ…NDGH and MEED…CRTG. Residues 194-221 show a composition bias toward polar residues; sequence SGVSSQPESQPVVNHRGVSSQPESQPVN.

It belongs to the RING-type zinc finger family. ATL subfamily.

Its subcellular location is the membrane. The enzyme catalyses S-ubiquitinyl-[E2 ubiquitin-conjugating enzyme]-L-cysteine + [acceptor protein]-L-lysine = [E2 ubiquitin-conjugating enzyme]-L-cysteine + N(6)-ubiquitinyl-[acceptor protein]-L-lysine.. Its pathway is protein modification; protein ubiquitination. The polypeptide is RING-H2 finger protein ATL58 (ATL58) (Arabidopsis thaliana (Mouse-ear cress)).